We begin with the raw amino-acid sequence, 467 residues long: Glutamine synthetase (467 aa).

The GS beta-grasp domain maps to 11 to 95 (HDVKWIDLRF…IVCDIIEPST (85 aa)). The 365-residue stretch at 103 to 467 (PRAIARRAEE…PLEYDLYYSV (365 aa)) folds into the GS catalytic domain. 2 residues coordinate Mg(2+): Glu-128 and Glu-130. Glu-206 is an ATP binding site. Positions 211 and 219 each coordinate Mg(2+). L-glutamate-binding positions include 263 to 264 (NG) and Gly-264. His-268 serves as a coordination point for Mg(2+). ATP contacts are provided by residues 270–272 (HMS) and Ser-272. L-glutamate is bound by residues Arg-320, Glu-326, and Arg-338. ATP is bound by residues Arg-338, Arg-343, and Lys-351. Position 356 (Glu-356) interacts with Mg(2+). Residue Arg-358 participates in L-glutamate binding. O-AMP-tyrosine is present on Tyr-396.

It belongs to the glutamine synthetase family. As to quaternary structure, oligomer of 12 subunits arranged in the form of two hexameric ring. Mg(2+) serves as cofactor.

It localises to the cytoplasm. It carries out the reaction L-glutamate + NH4(+) + ATP = L-glutamine + ADP + phosphate + H(+). Its activity is regulated as follows. The activity of this enzyme could be controlled by adenylation under conditions of abundant glutamine. Catalyzes the ATP-dependent biosynthesis of glutamine from glutamate and ammonia. In Azotobacter vinelandii, this protein is Glutamine synthetase.